A 520-amino-acid polypeptide reads, in one-letter code: Membrane-bound glycerophospholipid O-acyltransferase 2 (520 aa).

6 helical membrane-spanning segments follow: residues 22–42 (PIDQ…AIWF), 61–81 (TLLG…HFLV), 88–108 (CIMI…FALG), 184–204 (FMGI…FIEG), 237–257 (LLVC…LPVE), and 264–284 (FQAT…LLAA). Active-site residues include Asn-342 and His-373. 3 consecutive transmembrane segments (helical) span residues 366 to 386 (FILS…FLTG), 416 to 436 (VITW…FVLL), and 444 to 464 (FYSS…LLLP).

The protein belongs to the membrane-bound acyltransferase family. As to expression, expressed in neutrophils.

The protein localises to the endoplasmic reticulum membrane. The catalysed reaction is a 1-acyl-sn-glycero-3-phosphocholine + an acyl-CoA = a 1,2-diacyl-sn-glycero-3-phosphocholine + CoA. It catalyses the reaction a 1-acyl-sn-glycero-3-phosphoethanolamine + an acyl-CoA = a 1,2-diacyl-sn-glycero-3-phosphoethanolamine + CoA. The enzyme catalyses a 1-acyl-sn-glycero-3-phosphate + an acyl-CoA = a 1,2-diacyl-sn-glycero-3-phosphate + CoA. It carries out the reaction (9Z)-hexadecenoyl-CoA + 1-hexadecanoyl-sn-glycero-3-phosphocholine = 1-hexadecanoyl-2-(9Z-hexadecenoyl)-sn-glycero-3-phosphocholine + CoA. The catalysed reaction is 1-hexadecanoyl-sn-glycero-3-phosphoethanolamine + (9Z)-octadecenoyl-CoA = 1-hexadecanoyl-2-(9Z-octadecenoyl)-sn-glycero-3-phosphoethanolamine + CoA. It catalyses the reaction 1-hexadecanoyl-sn-glycero-3-phosphoethanolamine + (9Z)-hexadecenoyl-CoA = 1-hexadecanoyl-2-(9Z)-hexadecenoyl-sn-glycero-3-phosphoethanolamine + CoA. The enzyme catalyses 1-(9Z-octadecenoyl)-sn-glycero-3-phospho-L-serine + hexadecanoyl-CoA = 1-(9Z)-octadecenoyl-2-hexadecanoyl-sn-glycero-3-phosphoserine + CoA. It carries out the reaction (9Z,12Z)-octadecadienoyl-CoA + 1-hexadecanoyl-sn-glycero-3-phosphocholine = 1-hexadecanoyl-2-(9Z,12Z-octadecadienoyl)-sn-glycero-3-phosphocholine + CoA. The catalysed reaction is 1-hexadecanoyl-sn-glycero-3-phosphocholine + (9Z)-octadecenoyl-CoA = 1-hexadecanoyl-2-(9Z-octadecenoyl)-sn-glycero-3-phosphocholine + CoA. It catalyses the reaction 1-hexadecanoyl-sn-glycero-3-phosphate + (9Z)-hexadecenoyl-CoA = 1-hexadecanoyl-2-[(9Z)-hexadec-9-enoyl]-sn-glycero-3-phosphate + CoA. The enzyme catalyses 1-hexadecanoyl-sn-glycero-3-phosphate + (9Z)-octadecenoyl-CoA = 1-hexadecanoyl-2-(9Z-octadecenoyl)-sn-glycero-3-phosphate + CoA. It carries out the reaction a 1-O-(1Z-alkenyl)-sn-glycero-3-phosphocholine + (9Z)-octadecenoyl-CoA = 1-O-(1Z)-alkenyl-2-(9Z)-octadecenoyl-sn-glycero-3-phosphocholine + CoA. The catalysed reaction is a 1-O-(1Z-alkenyl)-sn-glycero-3-phosphoethanolamine + (9Z)-octadecenoyl-CoA = 1-O-(1Z)-alkenyl-2-(9Z)-octadecenoyl-sn-glycero-3-phosphoethanolamine + CoA. It catalyses the reaction 1-octadecanoyl-sn-glycero-3-phosphoethanolamine + (9Z)-octadecenoyl-CoA = 1-octadecanoyl-2-(9Z-octadecenoyl)-sn-glycero-3-phosphoethanolamine + CoA. The enzyme catalyses 1-octadecanoyl-sn-glycero-3-phosphocholine + (9Z)-octadecenoyl-CoA = 1-octadecanoyl-2-(9Z-octadecenoyl)-sn-glycero-3-phosphocholine + CoA. It carries out the reaction 1-(9Z-octadecenoyl)-sn-glycero-3-phosphoethanolamine + (9Z)-octadecenoyl-CoA = 1,2-di-(9Z-octadecenoyl)-sn-glycero-3-phosphoethanolamine + CoA. The protein operates within lipid metabolism; phospholipid metabolism. Its activity is regulated as follows. Partially inhibited by thimerosal. Functionally, acyltransferase which catalyzes the transfer of an acyl group from an acyl-CoA to a lysophospholipid leading to the production of a phospholipid and participates in the reacylation step of the phospholipid remodeling pathway also known as the Lands cycle. Catalyzes preferentially the acylation of lysophosphatidylethanolamine (1-acyl-sn-glycero-3-phosphoethanolamine or LPE) and lysophosphatidic acid (LPA) and to a lesser extend lysophosphatidylcholine (LPC) and lysophosphatidylserine (LPS). Prefers oleoyl-CoA as the acyl donor. May be involved in chondrocyte differentiation. The polypeptide is Membrane-bound glycerophospholipid O-acyltransferase 2 (Homo sapiens (Human)).